We begin with the raw amino-acid sequence, 906 residues long: Translation initiation factor IF-2 (906 aa).

Disordered regions lie at residues 94–125 (APEK…PETA), 165–232 (ESEA…TGKK), and 270–321 (RQEQ…SSEV). Basic and acidic residues-rich tracts occupy residues 165 to 176 (ESEAEKGTEIEK), 222 to 232 (GPAEARETGKK), and 270 to 284 (RQEQ…KREA). Basic residues predominate over residues 299–313 (QQRRSLKRGGKRKKY). The tr-type G domain maps to 405–574 (ERPPVITIMG…LLQAEMMELK (170 aa)). The segment at 414 to 421 (GHVDHGKT) is G1. Residue 414–421 (GHVDHGKT) coordinates GTP. Positions 439–443 (GITQH) are G2. The segment at 460-463 (DTPG) is G3. Residues 460 to 464 (DTPGH) and 514 to 517 (NKMD) contribute to the GTP site. Residues 514-517 (NKMD) are G4. The segment at 550–552 (SAH) is G5.

The protein belongs to the TRAFAC class translation factor GTPase superfamily. Classic translation factor GTPase family. IF-2 subfamily.

The protein resides in the cytoplasm. In terms of biological role, one of the essential components for the initiation of protein synthesis. Protects formylmethionyl-tRNA from spontaneous hydrolysis and promotes its binding to the 30S ribosomal subunits. Also involved in the hydrolysis of GTP during the formation of the 70S ribosomal complex. The chain is Translation initiation factor IF-2 from Sulfurovum sp. (strain NBC37-1).